Reading from the N-terminus, the 189-residue chain is Probable RNA 2'-phosphotransferase (189 aa).

Belongs to the KptA/TPT1 family.

Functionally, removes the 2'-phosphate from RNA via an intermediate in which the phosphate is ADP-ribosylated by NAD followed by a presumed transesterification to release the RNA and generate ADP-ribose 1''-2''-cyclic phosphate (APPR&gt;P). May function as an ADP-ribosylase. The chain is Probable RNA 2'-phosphotransferase from Streptomyces griseus subsp. griseus (strain JCM 4626 / CBS 651.72 / NBRC 13350 / KCC S-0626 / ISP 5235).